The chain runs to 373 residues: Putative F-box/kelch-repeat protein At2g41360 (373 aa).

In terms of domain architecture, F-box spans 8–54 (WSSLSCLPDEMVLNCLARVPRRYYENISCVSVRLRSLVRTPELYRMR). Kelch repeat units follow at residues 116–162 (EIYF…VFDG) and 163–208 (KIHV…MVSS).

The chain is Putative F-box/kelch-repeat protein At2g41360 from Arabidopsis thaliana (Mouse-ear cress).